The chain runs to 59 residues: MRCVPVFIILLLLIPSAPSAAVQPKTEKDDVPLASFHDSAMRILSRQCCPTIPECCRVG.

The signal sequence occupies residues 1-22 (MRCVPVFIILLLLIPSAPSAAV). Residues 23-46 (QPKTEKDDVPLASFHDSAMRILSR) constitute a propeptide that is removed on maturation. Gln47 carries the pyrrolidone carboxylic acid modification. A Valine amide modification is found at Val58.

Contains 2 disulfide bonds that can be either 'C1-C3, C2-C4' or 'C1-C4, C2-C3', since these disulfide connectivities have been observed for conotoxins with cysteine framework V (for examples, see AC P0DQQ7 and AC P81755). In terms of tissue distribution, expressed by the venom duct.

It localises to the secreted. This is Conotoxin ViVB from Conus virgo (Virgin cone).